A 387-amino-acid chain; its full sequence is Protochlorophyllide reductase A, chloroplastic (387 aa).

The N-terminal 35 residues, 1 to 35 (MALQVQAALLPSALSVPKKGNLSAVVKEPGFLSVS), are a transit peptide targeting the chloroplast.

The protein belongs to the short-chain dehydrogenases/reductases (SDR) family. POR subfamily.

Its subcellular location is the plastid. The protein localises to the chloroplast. It carries out the reaction chlorophyllide a + NADP(+) = protochlorophyllide a + NADPH + H(+). It participates in porphyrin-containing compound metabolism; chlorophyll biosynthesis. Phototransformation of protochlorophyllide (Pchlide) to chlorophyllide (Chlide). In Oryza sativa subsp. japonica (Rice), this protein is Protochlorophyllide reductase A, chloroplastic (PORA).